The primary structure comprises 114 residues: Nucleoid-associated protein Cyan7425_0899 (114 aa).

It belongs to the YbaB/EbfC family. As to quaternary structure, homodimer.

Its subcellular location is the cytoplasm. The protein resides in the nucleoid. Binds to DNA and alters its conformation. May be involved in regulation of gene expression, nucleoid organization and DNA protection. In Cyanothece sp. (strain PCC 7425 / ATCC 29141), this protein is Nucleoid-associated protein Cyan7425_0899.